We begin with the raw amino-acid sequence, 232 residues long: uncharacterized protein (232 aa).

A run of 5 helical transmembrane segments spans residues 69 to 91 (LISA…YILF), 104 to 126 (FLEP…FFAL), 139 to 161 (FSRF…FFFL), 166 to 188 (ICFT…AMLS), and 200 to 219 (FIYS…QLII).

Its subcellular location is the cell membrane. This is an uncharacterized protein from Bacillus subtilis (strain 168).